A 447-amino-acid polypeptide reads, in one-letter code: MAKRKISKAVLAYSGGLDTSIILKWLQDEYECEVVTFTADLGQGEEVEPARQKALDMGIKPENIFILDLREEFVRDFVFPMFRANAIYEGEYLLGTSIARPLISKKQIEIAHQTGADAVSHGATGKGNDQVRFELGYLALDPDIAVIAPWREWDLNSRTKLLAYAQEHGINIDNKGKPKPYSMDANLLHISYEGEHLENPYAEPEEDMWLWSVSPENAPDEPEYITISYKNGDPIAINREEMSPATILETLNTYGKKHGIGRIDIVENRMVGMKARGCYETPGGTIMLKAHRAIESITLDREEAHMKDELMPKYAKLIYNGMWWSPERKMLQAAIDATQENVEGTVKLKLYKGNVIVVGRKSEVSLYSEEHSTFEADDVYNQKDAEGFIRLNALRFIIEGKKQPERIKSLIGDYEETEVCRIETGSITICERIKRFFGFGKKTDKNA.

Residues Ala12 to Ser20 and Ala39 contribute to the ATP site. L-citrulline is bound by residues Tyr92 and Ser97. Residue Gly122 coordinates ATP. L-aspartate contacts are provided by Thr124, Asn128, and Asp129. Asn128 contacts L-citrulline. Residues Arg132, Ser182, Ser191, Glu267, and Tyr279 each contribute to the L-citrulline site.

Belongs to the argininosuccinate synthase family. Type 1 subfamily. Homotetramer.

It is found in the cytoplasm. It catalyses the reaction L-citrulline + L-aspartate + ATP = 2-(N(omega)-L-arginino)succinate + AMP + diphosphate + H(+). Its pathway is amino-acid biosynthesis; L-arginine biosynthesis; L-arginine from L-ornithine and carbamoyl phosphate: step 2/3. This chain is Argininosuccinate synthase, found in Sulfurovum sp. (strain NBC37-1).